The sequence spans 352 residues: Mitochondrial adenine nucleotide transporter ADNT1 (352 aa).

Solcar repeat units lie at residues 36-123 (KSIC…ASNG), 139-227 (LTPL…LKDW), and 242-343 (LTVV…VKDV). The next 6 membrane-spanning stretches (helical) occupy residues 41-61 (SLFA…PLER), 100-120 (GTNC…YEQA), 145-162 (LGAG…TYPM), 202-221 (GWLP…FSVY), 242-263 (LTVV…TIAY), and 324-340 (VKVV…YEMV).

The protein belongs to the mitochondrial carrier (TC 2.A.29) family. Expressed in seedling radicles and roots, vasculature of cotyledons, leaf primordia, leaves and sepals.

The protein resides in the mitochondrion inner membrane. Its activity is regulated as follows. Inhibited by pyridoxal 5-phosphate, bathophenanthroline, mersalyl, p-hydroxymercuribenzoate and tannic acid. In terms of biological role, mitochondrial adenylate carrier that catalyzes specifically the transport of ATP, ADP and AMP by a counter-exchange mechanism across the inner mitochondrial membrane. Substrate preference in reconstituted proteoliposomes is ATP &gt; AMP &gt; ADP. May play a role in oxidative phosphorylation and be important for the provision of energy required to support growth in heterotrophic tissues. In Arabidopsis thaliana (Mouse-ear cress), this protein is Mitochondrial adenine nucleotide transporter ADNT1 (ADNT1).